The sequence spans 254 residues: 3-oxo-5-alpha-steroid 4-dehydrogenase 2 (254 aa).

4 helical membrane passes run 8–28, 72–92, 146–166, and 206–226; these read SPVL…LYVA, PLSL…VHYF, FCLG…SDYI, and LATW…FLGL.

It belongs to the steroid 5-alpha reductase family.

It is found in the microsome membrane. Its subcellular location is the endoplasmic reticulum membrane. The enzyme catalyses a 3-oxo-5alpha-steroid + NADP(+) = a 3-oxo-Delta(4)-steroid + NADPH + H(+). It carries out the reaction 17beta-hydroxy-5alpha-androstan-3-one + NADP(+) = testosterone + NADPH + H(+). It catalyses the reaction 5alpha-pregnane-3,20-dione + NADP(+) = progesterone + NADPH + H(+). In terms of biological role, converts testosterone (T) into 5-alpha-dihydrotestosterone (DHT) and progesterone or corticosterone into their corresponding 5-alpha-3-oxosteroids. It plays a central role in sexual differentiation and androgen physiology. This is 3-oxo-5-alpha-steroid 4-dehydrogenase 2 (SRD5A2) from Macaca fascicularis (Crab-eating macaque).